The chain runs to 363 residues: Protein-arginine kinase (363 aa).

One can recognise a Phosphagen kinase C-terminal domain in the interval 24 to 254 (IVLSSRIRLA…AQLIEQERSA (231 aa)). ATP contacts are provided by residues 27–31 (SSRIR), His92, Arg125, 176–180 (RASVM), and 207–212 (RGIYGE). The RDXXRA motif of the pArg binding pocket involved in allosteric regulation motif lies at 337 to 342 (RDARRA).

It belongs to the ATP:guanido phosphotransferase family.

It catalyses the reaction L-arginyl-[protein] + ATP = N(omega)-phospho-L-arginyl-[protein] + ADP + H(+). Its activity is regulated as follows. Appears to be allosterically activated by the binding of pArg-containing polypeptides to the pArg-binding pocket localized in the C-terminal domain of McsB. Functionally, catalyzes the specific phosphorylation of arginine residues in a large number of proteins. Is part of the bacterial stress response system. Protein arginine phosphorylation has a physiologically important role and is involved in the regulation of many critical cellular processes, such as protein homeostasis, motility, competence, and stringent and stress responses, by regulating gene expression and protein activity. This is Protein-arginine kinase from Bacillus velezensis (strain DSM 23117 / BGSC 10A6 / LMG 26770 / FZB42) (Bacillus amyloliquefaciens subsp. plantarum).